Here is a 361-residue protein sequence, read N- to C-terminus: Aminomethyltransferase (361 aa).

The protein belongs to the GcvT family. The glycine cleavage system is composed of four proteins: P, T, L and H.

It carries out the reaction N(6)-[(R)-S(8)-aminomethyldihydrolipoyl]-L-lysyl-[protein] + (6S)-5,6,7,8-tetrahydrofolate = N(6)-[(R)-dihydrolipoyl]-L-lysyl-[protein] + (6R)-5,10-methylene-5,6,7,8-tetrahydrofolate + NH4(+). Functionally, the glycine cleavage system catalyzes the degradation of glycine. This is Aminomethyltransferase from Herpetosiphon aurantiacus (strain ATCC 23779 / DSM 785 / 114-95).